The chain runs to 97 residues: Mapk-regulated corepressor-interacting protein 1 (97 aa).

A disordered region spans residues 1–29; the sequence is MTSSPVSRVVYNGKRNSSPRSPTNSSEIF. Low complexity predominate over residues 15–26; that stretch reads RNSSPRSPTNSS. A Phosphoserine modification is found at Ser21. Thr30 bears the Phosphothreonine mark. Tyr41 carries the post-translational modification Phosphotyrosine. Position 79 is an N6-acetyllysine (Lys79). The PXDLS motif signature appears at 80–84; that stretch reads PIDLS.

It belongs to the MCRIP family. Interacts (unphosphorylated form, via the PXDLS motif) with CTBP1, competitively inhibiting CTBP-ZEB1 interaction. Interacts with CTBP2. Interacts with MCRIP2. Interacts with DDX6. Post-translationally, phosphorylation by MAPK3/1 (ERK1/2) regulates MCRIP1 binding to CTBP(s). Widely expressed (at protein level).

Its subcellular location is the nucleus. The protein localises to the cytoplasm. It localises to the stress granule. Functionally, the phosphorylation status of MCRIP1 functions as a molecular switch to regulate epithelial-mesenchymal transition. Unphosphorylated MCRIP1 binds to and inhibits the transcriptional corepressor CTBP(s). When phosphorylated by MAPK/ERK, MCRIP1 releases CTBP(s) resulting in transcriptional silencing of the E-cadherin gene and induction of epithelial-mesenchymal transition. The polypeptide is Mapk-regulated corepressor-interacting protein 1 (Mcrip1) (Mus musculus (Mouse)).